Reading from the N-terminus, the 131-residue chain is D-ribose pyranase (131 aa).

The Proton donor role is filled by histidine 20. Residues aspartate 28, histidine 98, and 120–122 (YAN) contribute to the substrate site.

Belongs to the RbsD / FucU family. RbsD subfamily. In terms of assembly, homodecamer.

It localises to the cytoplasm. The catalysed reaction is beta-D-ribopyranose = beta-D-ribofuranose. The protein operates within carbohydrate metabolism; D-ribose degradation; D-ribose 5-phosphate from beta-D-ribopyranose: step 1/2. Functionally, catalyzes the interconversion of beta-pyran and beta-furan forms of D-ribose. In Enterococcus faecalis (strain ATCC 700802 / V583), this protein is D-ribose pyranase.